The sequence spans 957 residues: PE-PGRS family protein PE_PGRS3 (957 aa).

The region spanning 4 to 94 is the PE domain; sequence VIAAPEVIAA…GAYAAAEAAA (91 aa). The span at 893–925 shows a compositional bias: basic residues; it reads CRRQRRADRQRRQRRQRRQSRGHARCRRHRRAA. The tract at residues 893–957 is disordered; the sequence is CRRQRRADRQ…GISCSPQMMP (65 aa).

This sequence belongs to the mycobacterial PE family. PGRS subfamily. A cleavage of the protein removes the N-terminal 120-150 residues, immediately upstream the PGRS domain. The exact position of the cleavage site could not be identified.

The protein localises to the cell outer membrane. The protein resides in the secreted. It localises to the cell wall. It is found in the cell surface. The arginine-rich C-terminal region protrudes from the mycobacterial membrane and mediates M.tuberculosis entry into host epithelial cells. May serve as a bridge between mycobacteria and host cells by interacting with specific host phospholipids and extracting them from host cells, for their direct integration or as a source of phosphate, during phases of TB pathogenesis when M.tuberculosis is short of phosphate supply. The sequence is that of PE-PGRS family protein PE_PGRS3 from Mycobacterium tuberculosis (strain ATCC 25618 / H37Rv).